A 117-amino-acid polypeptide reads, in one-letter code: MNNIIKMLNEEQMKTDVPEFGAGDTVVVKVRVVEGGKERLQAFEGVVIAKRNRGVHSAFTVRKISNGEGVERAFQTHSPIISSIEVKRRGRVRRAKLYYLRERSGKSARIREKLSTK.

It belongs to the bacterial ribosomal protein bL19 family.

This protein is located at the 30S-50S ribosomal subunit interface and may play a role in the structure and function of the aminoacyl-tRNA binding site. The chain is Large ribosomal subunit protein bL19 from Shewanella piezotolerans (strain WP3 / JCM 13877).